A 147-amino-acid polypeptide reads, in one-letter code: Hemoglobin subunit gamma-2 (147 aa).

Residues 3–147 enclose the Globin domain; it reads HFTEEDKATI…VASALSSRYH (145 aa). At threonine 13 the chain carries Phosphothreonine. 3 positions are modified to phosphoserine: serine 45, serine 51, and serine 53. N6-acetyllysine is present on lysine 60. Histidine 64 contributes to the heme b binding site. Position 83 is an N6-acetyllysine (lysine 83). Histidine 93 lines the heme b pocket. Cysteine 94 carries the post-translational modification S-nitrosocysteine. Phosphoserine occurs at positions 140, 143, and 144.

It belongs to the globin family. Heterotetramer of two alpha chains and two gamma chains in fetal hemoglobin (Hb F). In terms of tissue distribution, red blood cells.

Gamma chains make up the fetal hemoglobin F, in combination with alpha chains. The sequence is that of Hemoglobin subunit gamma-2 (HBG2) from Pongo pygmaeus (Bornean orangutan).